The chain runs to 95 residues: Protein TusB (95 aa).

This sequence belongs to the DsrH/TusB family. In terms of assembly, heterohexamer, formed by a dimer of trimers. The hexameric TusBCD complex contains 2 copies each of TusB, TusC and TusD. The TusBCD complex interacts with TusE.

The protein resides in the cytoplasm. In terms of biological role, part of a sulfur-relay system required for 2-thiolation of 5-methylaminomethyl-2-thiouridine (mnm(5)s(2)U) at tRNA wobble positions. The chain is Protein TusB from Klebsiella pneumoniae (strain 342).